Consider the following 162-residue polypeptide: SsrA-binding protein (162 aa).

Positions 137 to 154 are enriched in basic and acidic residues; the sequence is HDKREDTKAREWDREKAR. Positions 137–162 are disordered; that stretch reads HDKREDTKAREWDREKARIMKNKHRG.

This sequence belongs to the SmpB family.

It localises to the cytoplasm. Its function is as follows. Required for rescue of stalled ribosomes mediated by trans-translation. Binds to transfer-messenger RNA (tmRNA), required for stable association of tmRNA with ribosomes. tmRNA and SmpB together mimic tRNA shape, replacing the anticodon stem-loop with SmpB. tmRNA is encoded by the ssrA gene; the 2 termini fold to resemble tRNA(Ala) and it encodes a 'tag peptide', a short internal open reading frame. During trans-translation Ala-aminoacylated tmRNA acts like a tRNA, entering the A-site of stalled ribosomes, displacing the stalled mRNA. The ribosome then switches to translate the ORF on the tmRNA; the nascent peptide is terminated with the 'tag peptide' encoded by the tmRNA and targeted for degradation. The ribosome is freed to recommence translation, which seems to be the essential function of trans-translation. In Aeromonas hydrophila subsp. hydrophila (strain ATCC 7966 / DSM 30187 / BCRC 13018 / CCUG 14551 / JCM 1027 / KCTC 2358 / NCIMB 9240 / NCTC 8049), this protein is SsrA-binding protein.